The sequence spans 272 residues: ATP synthase subunit a (272 aa).

The next 5 membrane-spanning stretches (helical) occupy residues 41 to 61, 101 to 121, 147 to 167, 212 to 232, and 243 to 263; these read TLNIDSMFFSVVLGLLFLVLF, LIAPLALTIFVWVFLMNLMDL, DVNITLSMALGVFILILFYSI, LFGNMYAGELIFILIAGLLPW, and AIFHILIITLQAFIFMVLTIV.

It belongs to the ATPase A chain family. As to quaternary structure, F-type ATPases have 2 components, CF(1) - the catalytic core - and CF(0) - the membrane proton channel. CF(1) has five subunits: alpha(3), beta(3), gamma(1), delta(1), epsilon(1). CF(0) has three main subunits: a(1), b(2) and c(9-12). The alpha and beta chains form an alternating ring which encloses part of the gamma chain. CF(1) is attached to CF(0) by a central stalk formed by the gamma and epsilon chains, while a peripheral stalk is formed by the delta and b chains.

It localises to the cell inner membrane. Key component of the proton channel; it plays a direct role in the translocation of protons across the membrane. This chain is ATP synthase subunit a, found in Cronobacter sakazakii (strain ATCC BAA-894) (Enterobacter sakazakii).